The primary structure comprises 98 residues: NADH-ubiquinone oxidoreductase chain 4L (98 aa).

The next 3 helical transmembrane spans lie at 1-21, 29-49, and 59-79; these read MLPI…GVLI, TLLC…LMIT, and IPLI…ALLV.

It belongs to the complex I subunit 4L family. As to quaternary structure, core subunit of respiratory chain NADH dehydrogenase (Complex I) which is composed of 45 different subunits.

It localises to the mitochondrion inner membrane. It carries out the reaction a ubiquinone + NADH + 5 H(+)(in) = a ubiquinol + NAD(+) + 4 H(+)(out). In terms of biological role, core subunit of the mitochondrial membrane respiratory chain NADH dehydrogenase (Complex I) which catalyzes electron transfer from NADH through the respiratory chain, using ubiquinone as an electron acceptor. Part of the enzyme membrane arm which is embedded in the lipid bilayer and involved in proton translocation. This is NADH-ubiquinone oxidoreductase chain 4L (MT-ND4L) from Phascogale tapoatafa (Common wambenger).